Here is a 347-residue protein sequence, read N- to C-terminus: Ultraviolet-sensitive opsin (347 aa).

At 1-37 the chain is on the extracellular side; the sequence is MSGEEEFYLFKNGSIGGPWDGPQYHIAPPWAFYLQTA. N-linked (GlcNAc...) asparagine glycosylation is present at N12. Residues 38–58 traverse the membrane as a helical segment; sequence FMGFVFMVGTPLNAIVLVVTI. At 59 to 69 the chain is on the cytoplasmic side; it reads KYKKLRQPLNY. The helical transmembrane segment at 70–90 threads the bilayer; sequence ILVNISFCGFLACIICIFTVF. The Extracellular segment spans residues 91–106; sequence VSSSQGYFVFGKHVCA. C105 and C182 form a disulfide bridge. A helical membrane pass occupies residues 107-127; the sequence is FEGFMGATAGLVTGWSLAFLA. The Cytoplasmic portion of the chain corresponds to 128-147; that stretch reads FERYIVICKPLGNFRFTAKH. A helical transmembrane segment spans residues 148–168; it reads ALVVVVATWVIGIGVAIPPFF. Over 169 to 197 the chain is Extracellular; the sequence is GWSRYVPEGLQCSCGPDWYTVGTKYRSEY. A helical transmembrane segment spans residues 198–218; the sequence is YTWFLFIFCFIVPLSLIIFSY. Residues 219–247 lie on the Cytoplasmic side of the membrane; it reads SQLLSALRAVAAQQQESATTQKAEREVSR. The helical transmembrane segment at 248–268 threads the bilayer; the sequence is MVVVMVGSFCVCYVPYAALAM. Over 269 to 282 the chain is Extracellular; it reads YMVNNREHGIDLRL. The helical transmembrane segment at 283-303 threads the bilayer; that stretch reads VTIPAFFSKSSCVYNPIIYCF. K291 bears the N6-(retinylidene)lysine mark. Over 304 to 347 the chain is Cytoplasmic; sequence MNKQFRGCIMEMVCGKPMTDDSDMSSSAQRTEVSSVSSSQVSPS. A lipid anchor (S-palmitoyl cysteine) is attached at C317. The tract at residues 324 to 347 is disordered; that stretch reads DSDMSSSAQRTEVSSVSSSQVSPS. A compositionally biased stretch (low complexity) spans 328–347; it reads SSSAQRTEVSSVSSSQVSPS.

This sequence belongs to the G-protein coupled receptor 1 family. Opsin subfamily. Post-translationally, phosphorylated on some or all of the serine and threonine residues present in the C-terminal region. Cone photoreceptor cells.

The protein localises to the membrane. In terms of biological role, visual pigments are the light-absorbing molecules that mediate vision. They consist of an apoprotein, opsin, covalently linked to cis-retinal. The protein is Ultraviolet-sensitive opsin of Melopsittacus undulatus (Budgerigar).